We begin with the raw amino-acid sequence, 72 residues long: MAQPDSSSLAEVLDRVLDKGIVVDTFARISLVGIEILTVEARVVVASVDTFLHYAEEIAKIEQAELTAGAEA.

Belongs to the gas vesicle GvpA family. As to quaternary structure, the gas vesicle shell is 2 nm thick and consists of a single layer of this protein. It forms helical ribs nearly perpendicular to the long axis of the vesicle.

The protein resides in the gas vesicle shell. In terms of biological role, gas vesicles are hollow, gas filled proteinaceous nanostructures found in some microorganisms. During planktonic growth they allow positioning of the organism at a favorable depth for light or nutrient acquisition. GvpA forms the protein shell. The polypeptide is Gas vesicle protein A (Haloquadratum walsbyi (strain DSM 16790 / HBSQ001)).